We begin with the raw amino-acid sequence, 409 residues long: Argininosuccinate synthase (409 aa).

Residues alanine 8–serine 16 and alanine 34 contribute to the ATP site. Tyrosine 85 lines the L-citrulline pocket. Glycine 115 contributes to the ATP binding site. L-aspartate-binding residues include threonine 117, asparagine 121, and aspartate 122. Residue asparagine 121 participates in L-citrulline binding. L-citrulline-binding residues include arginine 125, serine 178, serine 187, glutamate 268, and tyrosine 280.

It belongs to the argininosuccinate synthase family. Type 1 subfamily. As to quaternary structure, homotetramer.

Its subcellular location is the cytoplasm. It catalyses the reaction L-citrulline + L-aspartate + ATP = 2-(N(omega)-L-arginino)succinate + AMP + diphosphate + H(+). The protein operates within amino-acid biosynthesis; L-arginine biosynthesis; L-arginine from L-ornithine and carbamoyl phosphate: step 2/3. This chain is Argininosuccinate synthase, found in Thermotoga maritima (strain ATCC 43589 / DSM 3109 / JCM 10099 / NBRC 100826 / MSB8).